The following is a 223-amino-acid chain: Urease accessory protein UreF (223 aa).

The protein belongs to the UreF family. UreD, UreF and UreG form a complex that acts as a GTP-hydrolysis-dependent molecular chaperone, activating the urease apoprotein by helping to assemble the nickel containing metallocenter of UreC. The UreE protein probably delivers the nickel.

It localises to the cytoplasm. Functionally, required for maturation of urease via the functional incorporation of the urease nickel metallocenter. The sequence is that of Urease accessory protein UreF from Agrobacterium fabrum (strain C58 / ATCC 33970) (Agrobacterium tumefaciens (strain C58)).